A 191-amino-acid polypeptide reads, in one-letter code: CASP-like protein 2U4 (191 aa).

Residues 1-25 (MGAYDGAEAPRAAPASTAANSRPSR) lie on the Cytoplasmic side of the membrane. A helical membrane pass occupies residues 26-46 (LLLLHSLLLRLVAVVLSILVI). Residues 47 to 68 (AVMVHAKQRVMIFKAEWDNSKA) lie on the Extracellular side of the membrane. Residues 69-89 (FVALVTISAICLGYSFLQFIL) traverse the membrane as a helical segment. At 90–114 (SAFHLCSKSWKSPTKCWAWMNFIAD) the chain is on the cytoplasmic side. Residues 115-135 (QILTYAMLGAAAAAAELAYIA) form a helical membrane-spanning segment. Residues 136 to 157 (KNGSSRAQWQPICSTFNTFCTR) are Extracellular-facing. Asn137 carries an N-linked (GlcNAc...) asparagine glycan. Residues 158-178 (AGASIILSFIAVLALANSSAI) form a helical membrane-spanning segment. The Cytoplasmic segment spans residues 179–191 (SAYHLFRRPSSSV).

The protein belongs to the Casparian strip membrane proteins (CASP) family. In terms of assembly, homodimer and heterodimers.

It localises to the cell membrane. The chain is CASP-like protein 2U4 from Selaginella moellendorffii (Spikemoss).